We begin with the raw amino-acid sequence, 62 residues long: Large ribosomal subunit protein bL28 (62 aa).

It belongs to the bacterial ribosomal protein bL28 family.

This chain is Large ribosomal subunit protein bL28, found in Aliarcobacter butzleri (strain RM4018) (Arcobacter butzleri).